The sequence spans 382 residues: Succinyl-diaminopimelate desuccinylase (382 aa).

H70 lines the Zn(2+) pocket. The active site involves D72. Zn(2+) is bound at residue D103. Catalysis depends on E137, which acts as the Proton acceptor. Positions 138, 166, and 355 each coordinate Zn(2+).

It belongs to the peptidase M20A family. DapE subfamily. In terms of assembly, homodimer. The cofactor is Zn(2+). Co(2+) serves as cofactor.

The enzyme catalyses N-succinyl-(2S,6S)-2,6-diaminopimelate + H2O = (2S,6S)-2,6-diaminopimelate + succinate. Its pathway is amino-acid biosynthesis; L-lysine biosynthesis via DAP pathway; LL-2,6-diaminopimelate from (S)-tetrahydrodipicolinate (succinylase route): step 3/3. In terms of biological role, catalyzes the hydrolysis of N-succinyl-L,L-diaminopimelic acid (SDAP), forming succinate and LL-2,6-diaminopimelate (DAP), an intermediate involved in the bacterial biosynthesis of lysine and meso-diaminopimelic acid, an essential component of bacterial cell walls. The chain is Succinyl-diaminopimelate desuccinylase from Paracoccus denitrificans (strain Pd 1222).